The following is a 375-amino-acid chain: Growth/differentiation factor 8 (375 aa).

The signal sequence occupies residues 1-23 (MQKLQLCVYIYLFMLIVAGPVDL). A propeptide spanning residues 24-266 (NENSEQKENV…VTDTPKRSRR (243 aa)) is cleaved from the precursor. A glycan (N-linked (GlcNAc...) asparagine) is linked at N71. 4 disulfides stabilise this stretch: C272/C282, C281/C340, C309/C372, and C313/C374.

The protein belongs to the TGF-beta family. In terms of assembly, homodimer; disulfide-linked. Interacts with WFIKKN2, leading to inhibit its activity. Interacts with FSTL3. Synthesized as large precursor molecule that undergoes proteolytic cleavage to generate an N-terminal propeptide and a disulfide linked C-terminal dimer, which is the biologically active molecule. The circulating form consists of a latent complex of the C-terminal dimer and other proteins, including its propeptide, which maintain the C-terminal dimer in a latent, inactive state. Ligand activation requires additional cleavage of the prodomain by a tolloid-like metalloproteinase.

It localises to the secreted. Acts specifically as a negative regulator of skeletal muscle growth. This is Growth/differentiation factor 8 (MSTN) from Papio hamadryas (Hamadryas baboon).